The primary structure comprises 502 residues: N-sulphoglucosamine sulphohydrolase (502 aa).

Residues 1-20 (MSCPVPACCALLLVLGLCRA) form the signal peptide. Ca(2+) contacts are provided by D31 and D32. N-linked (GlcNAc...) asparagine glycosylation occurs at N41. C70 serves as a coordination point for Ca(2+). C70 (nucleophile) is an active-site residue. Position 70 is a 3-oxoalanine (Cys) (C70). N142 and N151 each carry an N-linked (GlcNAc...) asparagine glycan. C183 and C194 are disulfide-bonded. An N-linked (GlcNAc...) asparagine glycan is attached at N264. The Ca(2+) site is built by D273 and N274. Residue N413 is glycosylated (N-linked (GlcNAc...) asparagine). A disulfide bridge connects residues C481 and C495.

It belongs to the sulfatase family. The cofactor is Ca(2+). Post-translationally, the conversion to 3-oxoalanine (also known as C-formylglycine, FGly), of a serine or cysteine residue in prokaryotes and of a cysteine residue in eukaryotes, is critical for catalytic activity.

The protein localises to the lysosome. It catalyses the reaction N-sulfo-D-glucosamine + H2O = D-glucosamine + sulfate. Its function is as follows. Catalyzes a step in lysosomal heparan sulfate degradation. This chain is N-sulphoglucosamine sulphohydrolase (SGSH), found in Homo sapiens (Human).